A 362-amino-acid chain; its full sequence is Probable dual-specificity RNA methyltransferase RlmN (362 aa).

Glutamate 105 acts as the Proton acceptor in catalysis. Residues 111 to 344 enclose the Radical SAM core domain; it reads HEYGNSICVT…VTIRREQGHD (234 aa). Cysteines 118 and 349 form a disulfide. Cysteine 125, cysteine 129, and cysteine 132 together coordinate [4Fe-4S] cluster. S-adenosyl-L-methionine contacts are provided by residues 175–176, serine 207, 230–232, and asparagine 306; these read GE and SLH. The active-site S-methylcysteine intermediate is cysteine 349.

It belongs to the radical SAM superfamily. RlmN family. The cofactor is [4Fe-4S] cluster.

It localises to the cytoplasm. It carries out the reaction adenosine(2503) in 23S rRNA + 2 reduced [2Fe-2S]-[ferredoxin] + 2 S-adenosyl-L-methionine = 2-methyladenosine(2503) in 23S rRNA + 5'-deoxyadenosine + L-methionine + 2 oxidized [2Fe-2S]-[ferredoxin] + S-adenosyl-L-homocysteine. The enzyme catalyses adenosine(37) in tRNA + 2 reduced [2Fe-2S]-[ferredoxin] + 2 S-adenosyl-L-methionine = 2-methyladenosine(37) in tRNA + 5'-deoxyadenosine + L-methionine + 2 oxidized [2Fe-2S]-[ferredoxin] + S-adenosyl-L-homocysteine. Its function is as follows. Specifically methylates position 2 of adenine 2503 in 23S rRNA and position 2 of adenine 37 in tRNAs. The polypeptide is Probable dual-specificity RNA methyltransferase RlmN (Bacillus cereus (strain ATCC 14579 / DSM 31 / CCUG 7414 / JCM 2152 / NBRC 15305 / NCIMB 9373 / NCTC 2599 / NRRL B-3711)).